The sequence spans 37 residues: Mu-agatoxin-Aa1d (37 aa).

Disulfide bonds link cysteine 2–cysteine 18, cysteine 9–cysteine 23, cysteine 17–cysteine 33, and cysteine 25–cysteine 31. Asparagine 37 carries the asparagine amide modification.

It belongs to the neurotoxin 07 (Beta/delta-agtx) family. 03 (aga-4) subfamily. Aga sub-subfamily. As to expression, expressed by the venom gland.

It is found in the secreted. In terms of biological role, insecticidal neurotoxin that induces an irreversible spastic paralysis when injected into insects. Modifies presynaptic voltage-gated sodium channels (Nav), causing them to open at the normal resting potential of the nerve. This leads to spontaneous release of neurotransmitter and repetitive action potentials in motor neurons. The protein is Mu-agatoxin-Aa1d of Agelenopsis aperta (North American funnel-web spider).